We begin with the raw amino-acid sequence, 583 residues long: ATP-dependent lipid A-core flippase (583 aa).

Helical transmembrane passes span 27–47, 69–89, 142–162, 165–185, and 249–269; these read LAVAVVALIINAVSDTYMVSL, LLVFGLMFIRGISSFVSTYCL, ALVSIVREGTSIIGLLVLMFY, WQLSLVLILVAPVVAWAIGFV, and AAANPIIQMIASIAIVVVLYL. The region spanning 28–310 is the ABC transmembrane type-1 domain; sequence AVAVVALIIN…LTNVTSQFQR (283 aa). One can recognise an ABC transporter domain in the interval 342 to 578; sequence VNVKDISFTY…DGAYAQLHRI (237 aa). 376-383 serves as a coordination point for ATP; that stretch reads GRSGSGKS.

The protein belongs to the ABC transporter superfamily. Lipid exporter (TC 3.A.1.106) family. Homodimer.

It localises to the cell inner membrane. It carries out the reaction ATP + H2O + lipid A-core oligosaccharideSide 1 = ADP + phosphate + lipid A-core oligosaccharideSide 2.. Functionally, involved in lipopolysaccharide (LPS) biosynthesis. Translocates lipid A-core from the inner to the outer leaflet of the inner membrane. Transmembrane domains (TMD) form a pore in the inner membrane and the ATP-binding domain (NBD) is responsible for energy generation. This Vibrio vulnificus (strain YJ016) protein is ATP-dependent lipid A-core flippase.